The primary structure comprises 262 residues: Ribose-5-phosphate isomerase A (262 aa).

Residues 33–36, 89–92, and 102–105 each bind substrate; these read TGST, DGAD, and KGGG. Glutamate 111 serves as the catalytic Proton acceptor. Position 129 (lysine 129) interacts with substrate.

It belongs to the ribose 5-phosphate isomerase family. As to quaternary structure, homodimer.

The catalysed reaction is aldehydo-D-ribose 5-phosphate = D-ribulose 5-phosphate. It functions in the pathway carbohydrate degradation; pentose phosphate pathway; D-ribose 5-phosphate from D-ribulose 5-phosphate (non-oxidative stage): step 1/1. Functionally, catalyzes the reversible conversion of ribose-5-phosphate to ribulose 5-phosphate. This chain is Ribose-5-phosphate isomerase A, found in Cereibacter sphaeroides (strain ATCC 17029 / ATH 2.4.9) (Rhodobacter sphaeroides).